The chain runs to 295 residues: Protoheme IX farnesyltransferase (295 aa).

Transmembrane regions (helical) follow at residues 43-63 (PIQL…VAAL), 92-112 (SAFV…YALV), 114-134 (PLAA…YTPA), 140-160 (WSTE…WSAG), 166-186 (ALGW…FMAV), 231-251 (LLWG…GLWF), and 272-292 (FFAS…DRLF).

This sequence belongs to the UbiA prenyltransferase family. Protoheme IX farnesyltransferase subfamily.

It localises to the cell inner membrane. The catalysed reaction is heme b + (2E,6E)-farnesyl diphosphate + H2O = Fe(II)-heme o + diphosphate. It functions in the pathway porphyrin-containing compound metabolism; heme O biosynthesis; heme O from protoheme: step 1/1. In terms of biological role, converts heme B (protoheme IX) to heme O by substitution of the vinyl group on carbon 2 of heme B porphyrin ring with a hydroxyethyl farnesyl side group. The chain is Protoheme IX farnesyltransferase from Opitutus terrae (strain DSM 11246 / JCM 15787 / PB90-1).